Consider the following 855-residue polypeptide: Cone cGMP-specific 3',5'-cyclic phosphodiesterase subunit alpha' (855 aa).

2 GAF domains span residues 70-219 and 251-428; these read SVEL…SIIL and DVER…GWSL. Residues S92, S116, 164–167, and T171 contribute to the 3',5'-cyclic GMP site; that span reads DKQT. Positions 481 to 814 constitute a PDEase domain; it reads EEKQLVTILK…VEWKSLADEY (334 aa). H557 acts as the Proton donor in catalysis. A divalent metal cation is bound by residues H561, H597, D598, and D718. The interval 823 to 855 is disordered; it reads EMKKQEEGNTTEKAVEDSGGGGDDKKSKTCLML. The residue at position 852 (C852) is a Cysteine methyl ester. A lipid anchor (S-geranylgeranyl cysteine) is attached at C852. A propeptide spans 853 to 855 (removed in mature form); the sequence is LML.

It belongs to the cyclic nucleotide phosphodiesterase family. In terms of assembly, composed of two alpha' subunits that are associated with 3 smaller proteins of 11, 13, and 15 kDa. A divalent metal cation serves as cofactor.

Its subcellular location is the cell membrane. It catalyses the reaction 3',5'-cyclic GMP + H2O = GMP + H(+). Its function is as follows. As cone-specific cGMP phosphodiesterase, it plays an essential role in light detection and cone phototransduction by rapidly decreasing intracellular levels of cGMP. This Bos taurus (Bovine) protein is Cone cGMP-specific 3',5'-cyclic phosphodiesterase subunit alpha' (PDE6C).